The primary structure comprises 306 residues: HTH-type transcriptional regulator AlkR (306 aa).

In terms of domain architecture, HTH araC/xylS-type spans 207-305; sequence SNALAAIHAY…EQSPKHYRQQ (99 aa). DNA-binding regions (H-T-H motif) lie at residues 224 to 245 and 272 to 295; these read ESLA…QSIV and IQQI…KRQF.

It participates in hydrocarbon metabolism; alkane degradation. In terms of biological role, this protein activates the expression of the alkane 1-monooxygenase AlkM. In Acinetobacter baylyi (strain ATCC 33305 / BD413 / ADP1), this protein is HTH-type transcriptional regulator AlkR (alkR).